A 403-amino-acid chain; its full sequence is Chorismate synthase (403 aa).

Arginine 40 and arginine 46 together coordinate NADP(+). Residues 140 to 142, 261 to 262, glycine 305, 320 to 324, and arginine 346 each bind FMN; these read RSS, QA, and KPIST.

The protein belongs to the chorismate synthase family. Homotetramer. Requires FMNH2 as cofactor.

It carries out the reaction 5-O-(1-carboxyvinyl)-3-phosphoshikimate = chorismate + phosphate. It functions in the pathway metabolic intermediate biosynthesis; chorismate biosynthesis; chorismate from D-erythrose 4-phosphate and phosphoenolpyruvate: step 7/7. Its function is as follows. Catalyzes the anti-1,4-elimination of the C-3 phosphate and the C-6 proR hydrogen from 5-enolpyruvylshikimate-3-phosphate (EPSP) to yield chorismate, which is the branch point compound that serves as the starting substrate for the three terminal pathways of aromatic amino acid biosynthesis. This reaction introduces a second double bond into the aromatic ring system. The sequence is that of Chorismate synthase from Corynebacterium diphtheriae (strain ATCC 700971 / NCTC 13129 / Biotype gravis).